Here is a 276-residue protein sequence, read N- to C-terminus: Bis(5'-nucleosyl)-tetraphosphatase, symmetrical (276 aa).

This sequence belongs to the Ap4A hydrolase family.

The catalysed reaction is P(1),P(4)-bis(5'-adenosyl) tetraphosphate + H2O = 2 ADP + 2 H(+). Functionally, hydrolyzes diadenosine 5',5'''-P1,P4-tetraphosphate to yield ADP. The protein is Bis(5'-nucleosyl)-tetraphosphatase, symmetrical of Legionella pneumophila (strain Corby).